Reading from the N-terminus, the 343-residue chain is MGEYIMEKNTIILGIETSCDETAVAVVKNGTEIIANVVASQIESHKRFGGVVPEIASRHHVEEITVVLEEALKEANITFDDIDAIAVTEGPGLVGALLIGVNAAKAVAFAHDIPLVGVHHIAGHIYANRLVKEVQFPLLSLVVSGGHTELVYMKEHGSFEVIGETRDDAAGEAYDKVARTLSMPYPGGPHIDRLAHEGEPTIDLPRAWLEPDSYDFSFSGLKSAVINTVHNAKQRGIEIAPEDLAASFQESVIDVLVTKAARAAEAYNVKQLLLAGGVAANKGLRARLEEEFAQKENIELIIPPLSLCTDNAAMIAAAGTIAYEQGKRATLALNANPGLDIEA.

The Fe cation site is built by H120 and H124. Residues 142 to 146 (VVSGG), D175, G188, D192, and N281 each bind substrate. Fe cation is bound at residue D310.

It belongs to the KAE1 / TsaD family. Fe(2+) serves as cofactor.

Its subcellular location is the cytoplasm. It catalyses the reaction L-threonylcarbamoyladenylate + adenosine(37) in tRNA = N(6)-L-threonylcarbamoyladenosine(37) in tRNA + AMP + H(+). Required for the formation of a threonylcarbamoyl group on adenosine at position 37 (t(6)A37) in tRNAs that read codons beginning with adenine. Is involved in the transfer of the threonylcarbamoyl moiety of threonylcarbamoyl-AMP (TC-AMP) to the N6 group of A37, together with TsaE and TsaB. TsaD likely plays a direct catalytic role in this reaction. The protein is tRNA N6-adenosine threonylcarbamoyltransferase of Bacillus cereus (strain ATCC 14579 / DSM 31 / CCUG 7414 / JCM 2152 / NBRC 15305 / NCIMB 9373 / NCTC 2599 / NRRL B-3711).